The sequence spans 125 residues: Glycine cleavage system H protein (125 aa).

The region spanning 19-101 is the Lipoyl-binding domain; that stretch reads EVTVGITDHA…YHEGWLVKLK (83 aa). Position 60 is an N6-lipoyllysine (K60).

This sequence belongs to the GcvH family. As to quaternary structure, the glycine cleavage system is composed of four proteins: P, T, L and H. It depends on (R)-lipoate as a cofactor.

The glycine cleavage system catalyzes the degradation of glycine. The H protein shuttles the methylamine group of glycine from the P protein to the T protein. This chain is Glycine cleavage system H protein, found in Legionella pneumophila (strain Corby).